A 408-amino-acid polypeptide reads, in one-letter code: Type II methyltransferase M.VspI (408 aa).

It belongs to the N(4)/N(6)-methyltransferase family.

It carries out the reaction a 2'-deoxyadenosine in DNA + S-adenosyl-L-methionine = an N(6)-methyl-2'-deoxyadenosine in DNA + S-adenosyl-L-homocysteine + H(+). Functionally, a gamma subtype methylase, recognizes the double-stranded sequence 5'-ATTAAT-3', methylates A-5 on both strands, and protects the DNA from cleavage by the VspI endonuclease. This chain is Type II methyltransferase M.VspI, found in Vibrio sp. (strain 343).